The chain runs to 379 residues: Pathogen-associated molecular patterns-induced protein A70 (379 aa).

The helical transmembrane segment at 7-29 threads the bilayer; the sequence is VASFFTPTTLFLLLNLMIGTIVV. N122 is a glycosylation site (N-linked (GlcNAc...) asparagine). Residues 133–154 are disordered; sequence TGSDPHSHSHSHLDLHPDPAPA. Residues 137-149 show a composition bias toward basic and acidic residues; that stretch reads PHSHSHSHLDLHP. N170 carries an N-linked (GlcNAc...) asparagine glycan. Disordered regions lie at residues 216–238 and 256–347; these read PEED…LTRA and SDPD…DGVD. The segment covering 221–231 has biased composition (polar residues); sequence PTGTGVNSQIN. 2 stretches are compositionally biased toward basic and acidic residues: residues 256–285 and 322–335; these read SDPD…ESKK and SLER…RVER.

It localises to the membrane. This Arabidopsis thaliana (Mouse-ear cress) protein is Pathogen-associated molecular patterns-induced protein A70.